Reading from the N-terminus, the 145-residue chain is Large ribosomal subunit protein uL13 (145 aa).

It belongs to the universal ribosomal protein uL13 family. As to quaternary structure, part of the 50S ribosomal subunit. Binds to Obg (AC P20964).

Its function is as follows. This protein is one of the early assembly proteins of the 50S ribosomal subunit, although it is not seen to bind rRNA by itself. It is important during the early stages of 50S assembly. The polypeptide is Large ribosomal subunit protein uL13 (Bacillus subtilis (strain 168)).